Here is a 112-residue protein sequence, read N- to C-terminus: MNFDMSKLMQQAQKMQEQMKKAQQERENMEVIGESGAGLVTVTMTGKYDVKSVSIDNSLMSEDKEILEDLIAAAVNSAVKKVEENSTASSDIYKMAKDAGIDLPSGINFPFK.

The interval 1–27 (MNFDMSKLMQQAQKMQEQMKKAQQERE) is disordered. Basic and acidic residues predominate over residues 17 to 27 (EQMKKAQQERE).

This sequence belongs to the YbaB/EbfC family. Homodimer.

Its subcellular location is the cytoplasm. The protein resides in the nucleoid. Binds to DNA and alters its conformation. May be involved in regulation of gene expression, nucleoid organization and DNA protection. The sequence is that of Nucleoid-associated protein FTF0810c from Francisella tularensis subsp. tularensis (strain FSC 198).